The sequence spans 557 residues: Probable asparagine synthetase [glutamine-hydrolyzing] (557 aa).

The For GATase activity role is filled by Cys2. In terms of domain architecture, Glutamine amidotransferase type-2 spans 2-188; it reads CGILAVHHVA…PGHYYDSETK (187 aa). L-glutamine-binding positions include 50 to 54, 75 to 77, and Asp99; these read RLAIV and NGE. Residues 196 to 531 form the Asparagine synthetase domain; sequence PSWWDENKIP…PRQCADTVMR (336 aa). ATP contacts are provided by residues Leu235, Ile280, and 354–355; that span reads SG. Ser391 and Ser489 each carry phosphoserine.

It is found in the cytoplasm. Its subcellular location is the nucleus. The catalysed reaction is L-aspartate + L-glutamine + ATP + H2O = L-asparagine + L-glutamate + AMP + diphosphate + H(+). Its pathway is amino-acid biosynthesis; L-asparagine biosynthesis; L-asparagine from L-aspartate (L-Gln route): step 1/1. This chain is Probable asparagine synthetase [glutamine-hydrolyzing] (asn1), found in Schizosaccharomyces pombe (strain 972 / ATCC 24843) (Fission yeast).